Here is an 87-residue protein sequence, read N- to C-terminus: Small ribosomal subunit protein uS17 (87 aa).

The protein belongs to the universal ribosomal protein uS17 family. Part of the 30S ribosomal subunit.

Functionally, one of the primary rRNA binding proteins, it binds specifically to the 5'-end of 16S ribosomal RNA. The sequence is that of Small ribosomal subunit protein uS17 from Macrococcus caseolyticus (strain JCSC5402) (Macrococcoides caseolyticum).